Consider the following 307-residue polypeptide: Methionyl-tRNA formyltransferase (307 aa).

110–113 (SLLP) contributes to the (6S)-5,6,7,8-tetrahydrofolate binding site.

Belongs to the Fmt family.

It catalyses the reaction L-methionyl-tRNA(fMet) + (6R)-10-formyltetrahydrofolate = N-formyl-L-methionyl-tRNA(fMet) + (6S)-5,6,7,8-tetrahydrofolate + H(+). Its function is as follows. Attaches a formyl group to the free amino group of methionyl-tRNA(fMet). The formyl group appears to play a dual role in the initiator identity of N-formylmethionyl-tRNA by promoting its recognition by IF2 and preventing the misappropriation of this tRNA by the elongation apparatus. The chain is Methionyl-tRNA formyltransferase from Rhodococcus erythropolis (strain PR4 / NBRC 100887).